A 340-amino-acid chain; its full sequence is Protein-arginine kinase (340 aa).

Positions 21 to 242 constitute a Phosphagen kinase C-terminal domain; sequence VVLSSRIRLA…EQIIMQERVA (222 aa). ATP is bound by residues 24–28, His79, Arg113, 164–168, and 195–200; these read SSRIR, RASVM, and RGIYGE.

It belongs to the ATP:guanido phosphotransferase family.

The enzyme catalyses L-arginyl-[protein] + ATP = N(omega)-phospho-L-arginyl-[protein] + ADP + H(+). Its function is as follows. Catalyzes the specific phosphorylation of arginine residues in proteins. The sequence is that of Protein-arginine kinase from Listeria welshimeri serovar 6b (strain ATCC 35897 / DSM 20650 / CCUG 15529 / CIP 8149 / NCTC 11857 / SLCC 5334 / V8).